The chain runs to 409 residues: MASGKTTGKTDAPAPVIKLGGPKPPKVGSSGNASWFQALKAKKLNSPPPKFEGSGVPDNENLKLSQQHGYWRRQARYKPGKGGRKSVPDAWYFYYTGTGPAADLNWGYSQDGIVWVSAKGADTKSRSNQGTRDPDKFDQYPLRFSDGGPDGNFRWDFIPINRGRSGRSTAASSAASSRAPSRDGSRGRRSGAEDDLIARAAKIIQDQQKKGSRITKAKADEMAHRRYCKRTIPPGYKVDQVFGPRTKCKEGNFGDDKMNEEGIKDGRVTAMLNLVPSSHACLFGSRVTPKLQPDGLHLRFEFTTVVSRDDPQFDNYVKICDQCVDGVGTRPKDDEPRPKSRPNSRPATRTSSPAPRQQPQKKEKKSKKQDDEVDKALTSDEERNNAQLEFDDEPKVINWGESALGENEL.

Disordered stretches follow at residues 1–32, 44–63, 120–145, and 164–193; these read MASG…SSGN, LNSP…ENLK, GADT…LRFS, and RSGR…SGAE. The segment covering 15–31 has biased composition (low complexity); sequence PVIKLGGPKPPKVGSSG. Residues 29-160 form an RNA-binding region; sequence SSGNASWFQA…GNFRWDFIPI (132 aa). The CoV N NTD domain occupies 31–156; the sequence is GNASWFQALK…GGPDGNFRWD (126 aa). The span at 164–179 shows a compositional bias: low complexity; the sequence is RSGRSTAASSAASSRA. Basic and acidic residues predominate over residues 180–192; that stretch reads PSRDGSRGRRSGA. A Phosphoserine; by host modification is found at Ser-190. The region spanning 215–331 is the CoV N CTD domain; sequence TKAKADEMAH…QCVDGVGTRP (117 aa). Residues 226–333 form a dimerization region; it reads RYCKRTIPPG…VDGVGTRPKD (108 aa). The cysteines at positions 320 and 323 are disulfide-linked. A disordered region spans residues 327–409; that stretch reads VGTRPKDDEP…GESALGENEL (83 aa). Positions 341–355 are enriched in polar residues; sequence RPNSRPATRTSSPAP. Basic and acidic residues predominate over residues 368–384; that stretch reads KQDDEVDKALTSDEERN. Phosphothreonine; by host is present on Thr-378. Ser-379 carries the phosphoserine; by host modification.

Belongs to the gammacoronavirus nucleocapsid protein family. As to quaternary structure, homooligomer. Both monomeric and oligomeric forms interact with RNA. Interacts with protein M. Interacts with NSP3; this interaction serves to tether the genome to the newly translated replicase-transcriptase complex at a very early stage of infection. In terms of processing, ADP-ribosylated. The ADP-ribosylation is retained in the virion during infection. Post-translationally, phosphorylated on serine and threonine residues.

It localises to the virion. The protein localises to the host endoplasmic reticulum-Golgi intermediate compartment. The protein resides in the host Golgi apparatus. In terms of biological role, packages the positive strand viral genome RNA into a helical ribonucleocapsid (RNP) and plays a fundamental role during virion assembly through its interactions with the viral genome and membrane protein M. Plays an important role in enhancing the efficiency of subgenomic viral RNA transcription as well as viral replication. The protein is Nucleoprotein of Avian infectious bronchitis virus (strain D1466) (IBV).